The primary structure comprises 49 residues: Large ribosomal subunit protein bL33 (49 aa).

The protein belongs to the bacterial ribosomal protein bL33 family.

In Lacticaseibacillus casei (strain BL23) (Lactobacillus casei), this protein is Large ribosomal subunit protein bL33.